A 495-amino-acid chain; its full sequence is Neuronal acetylcholine receptor subunit beta-4 (495 aa).

The N-terminal stretch at methionine 1–cysteine 20 is a signal peptide. The Extracellular portion of the chain corresponds to arginine 21–threonine 235. N-linked (GlcNAc...) asparagine glycans are attached at residues asparagine 35, asparagine 92, asparagine 137, and asparagine 165. A disulfide bridge connects residues cysteine 152 and cysteine 166. The helical transmembrane segment at isoleucine 236–proline 256 threads the bilayer. Topologically, residues serine 257–threonine 264 are cytoplasmic. Glutamate 261 contributes to the Na(+) binding site. A helical membrane pass occupies residues leucine 265–proline 285. Topologically, residues proline 286–tyrosine 297 are extracellular. Residues leucine 298 to valine 318 traverse the membrane as a helical segment. The Cytoplasmic portion of the chain corresponds to histidine 319–arginine 463. Residues leucine 464–proline 484 traverse the membrane as a helical segment. The Extracellular segment spans residues leucine 485–serine 495.

It belongs to the ligand-gated ion channel (TC 1.A.9) family. Acetylcholine receptor (TC 1.A.9.1) subfamily. Beta-4/CHRNB4 sub-subfamily. Neuronal AChR is composed of two different types of subunits: alpha and beta. CHRNB4/Beta-4 subunit can be combined to CHRNA2/alpha-2, CHRNA3/alpha-3 or CHRNA4/alpha-4, CHRNA5/alpha-5 and CHRNB3/beta-3 to give rise to functional receptors. Forms stoichiometries such as (CHRNA3)2:(CHRNB4)3 or (CHRNA3:CHRNB4)2:CHRNB3. Interacts with RIC3; which is required for proper folding and assembly. Interacts with LYPD6. In terms of tissue distribution, in the brain, it is detected in the medial habenula. In the peripheral nervous system, it is found at least in the adrenal gland.

It is found in the synaptic cell membrane. It localises to the cell membrane. The enzyme catalyses Ca(2+)(in) = Ca(2+)(out). It catalyses the reaction K(+)(in) = K(+)(out). It carries out the reaction Na(+)(in) = Na(+)(out). With respect to regulation, activated by a myriad of ligands such as acetylcholine, cytisine, nicotine, choline and epibatidine. nAChR activity is inhibited by the antagonist alpha-conotoxins BuIA and MII, small disulfide-constrained peptides from cone snails. The heteropentamer CHRNA3:CHRNB4 activity is blocked by the alpha-conotoxin ImI and AuIB. Functionally, component of neuronal acetylcholine receptors (nAChRs) that function as pentameric, ligand-gated cation channels with high calcium permeability among other activities. nAChRs are excitatory neurotrasnmitter receptors formed by a collection of nAChR subunits known to mediate synaptic transmission in the nervous system and the neuromuscular junction. Each nAchR subunit confers differential attributes to channel properties, including activation, deactivation and desensitization kinetics, pH sensitivity, cation permeability, and binding to allosteric modulators. CHRNB4 forms heteropentameric neuronal acetylcholine receptors with CHRNA2, CHRNA3 and CHRNA4, as well as CHRNA5 and CHRNB3 as accesory subunits. CHRNA3:CHRNB4 being predominant in neurons of the autonomic ganglia, it is known as ganglionic nicotinic receptor. CHRNA3:CHRNB4 or CHRNA3:CHRNA5:CHRNB4 play also an important role in the habenulo-interpeduncular tract, modulating the mesolimbic dopamine system and affecting reward circuits and addiction. Hypothalamic CHRNA3:CHRNB4 nAChR activation by nicotine leads to activation of POMC neurons and a decrease in food intake. This chain is Neuronal acetylcholine receptor subunit beta-4 (Chrnb4), found in Rattus norvegicus (Rat).